The following is a 276-amino-acid chain: MRESLKNSKRLVIKVGTSTLMYGNGHINLRTIEKLAMVLSDLRNEGKEVILVSSGAIGVGCHKLQLPVRPTSIPEQQAVASVGQSELMHIYSKFFGEYGQVVGQVLLTRDVTDFPISRENVMNTLESLLERGIIPIVNENDTVAVEELEHVTKYGDNDLLSAIVAKLVQADLLIMLSDIDGFYGSNPSTDPDAVMFSEINQITPEIEALAGGKGSKFGTGGMLTKLSAASYCMNANQKMILTNGKNPTIIFDIMQGEQIGTLFASKKEEFSHDGTH.

Lysine 14 is a binding site for ATP. Positions 54, 141, and 157 each coordinate substrate. Residues serine 177 to aspartate 178 and threonine 219 to lysine 225 contribute to the ATP site.

The protein belongs to the glutamate 5-kinase family.

Its subcellular location is the cytoplasm. It catalyses the reaction L-glutamate + ATP = L-glutamyl 5-phosphate + ADP. It participates in amino-acid biosynthesis; L-proline biosynthesis; L-glutamate 5-semialdehyde from L-glutamate: step 1/2. Catalyzes the transfer of a phosphate group to glutamate to form L-glutamate 5-phosphate. This chain is Glutamate 5-kinase, found in Listeria monocytogenes serovar 1/2a (strain ATCC BAA-679 / EGD-e).